We begin with the raw amino-acid sequence, 123 residues long: uncharacterized protein (123 aa).

A helical transmembrane segment spans residues 1-21; it reads MHIIAKSILLMAVSFLVIIFT.

The protein resides in the membrane. This is an uncharacterized protein from Methanocaldococcus jannaschii (strain ATCC 43067 / DSM 2661 / JAL-1 / JCM 10045 / NBRC 100440) (Methanococcus jannaschii).